A 335-amino-acid chain; its full sequence is MIEFHNVHKTYRVAGKEIPALHPTSLRVDSGQVFGIIGHSGAGKSTLLRLINRLETPSGGQIVVDGEDVTALDANGLRRFRQQVGMIFQHFNLLASRTVADNVAMPLTLAGDMPRKQIDQRVAELLERVGLSDHAKKYPAQLSGGQKQRVGIARALATKPKILLCDEATSALDPQTTASVLQLLAEINRELKLTIVLITHEMDVIRRVCDQVAVMDAGVIVEHGKVADVFLHPQHATTRRFVQEDEQIDENEQRDDFAHVQGRIVRLTFQGEATYAPLLGTVARETGVDYSILAGRIDRIKDTPYGQLTLAVTGGDMDAAFARFTAADVHMEVLR.

Residues 2–242 (IEFHNVHKTY…PQHATTRRFV (241 aa)) enclose the ABC transporter domain. Position 38 to 45 (38 to 45 (GHSGAGKS)) interacts with ATP.

Belongs to the ABC transporter superfamily. Methionine importer (TC 3.A.1.24) family. In terms of assembly, the complex is composed of two ATP-binding proteins (MetN), two transmembrane proteins (MetI) and a solute-binding protein (MetQ).

It localises to the cell inner membrane. It catalyses the reaction L-methionine(out) + ATP + H2O = L-methionine(in) + ADP + phosphate + H(+). It carries out the reaction D-methionine(out) + ATP + H2O = D-methionine(in) + ADP + phosphate + H(+). In terms of biological role, part of the ABC transporter complex MetNIQ involved in methionine import. Responsible for energy coupling to the transport system. This is Methionine import ATP-binding protein MetN 1 from Pseudomonas syringae pv. syringae (strain B728a).